Here is a 558-residue protein sequence, read N- to C-terminus: Putative cation/proton antiporter YbaL (558 aa).

Residues 1-3 lie on the Periplasmic side of the membrane; sequence MHH. Residues 4–24 traverse the membrane as a helical segment; that stretch reads ATPLITTIVGGLVLAFILGML. Residues 25-31 lie on the Cytoplasmic side of the membrane; sequence ANKLRIS. The chain crosses the membrane as a helical span at residues 32–52; the sequence is PLVGYLLAGVLAGPFTPGFVA. Topologically, residues 53 to 55 are periplasmic; sequence DTK. The helical transmembrane segment at 56-76 threads the bilayer; the sequence is LAPELAELGVILLMFGVGLHF. Residues 77 to 85 lie on the Cytoplasmic side of the membrane; it reads SLKDLMAVK. The chain crosses the membrane as a helical span at residues 86–106; it reads AIAIPGAIAQIAVATLLGMAL. Topologically, residues 107-112 are periplasmic; that stretch reads SAVLGW. The chain crosses the membrane as a helical span at residues 113 to 133; it reads SLMTGIVFGLCLSTASTVVLL. Topologically, residues 134-148 are cytoplasmic; the sequence is RALEERQLIDSQRGQ. The chain crosses the membrane as a helical span at residues 149–169; that stretch reads IAIGWLIVEDLVMVLTLVLLP. At 170–185 the chain is on the periplasmic side; it reads AVAGMMEQGDVGFATL. Residues 186–206 form a helical membrane-spanning segment; that stretch reads AVDMGITIGKVIAFIAIMMLV. The Cytoplasmic portion of the chain corresponds to 207–225; it reads GRRLVPWIMARSAATGSRE. A helical transmembrane segment spans residues 226 to 246; that stretch reads LFTLSVLALALGVAFGAVELF. Position 247 (Asp247) is a topological domain, periplasmic. A helical membrane pass occupies residues 248–268; that stretch reads VSFALGAFFAGMVLNESELSH. Topologically, residues 269–279 are cytoplasmic; it reads RAAHDTLPLRD. The helical transmembrane segment at 280 to 300 threads the bilayer; it reads AFAVLFFVSVGMLFDPLILIQ. Topologically, residues 301-303 are periplasmic; the sequence is QPL. The helical transmembrane segment at 304-324 threads the bilayer; it reads AVLATLAIILFGKSLAAFFLV. At 325-336 the chain is on the cytoplasmic side; it reads RLFGHSQRTALT. A helical membrane pass occupies residues 337-357; sequence IAASLAQIGEFAFILAGLGMA. The Periplasmic segment spans residues 358–367; that stretch reads LNLLPQAGQN. The helical transmembrane segment at 368–388 threads the bilayer; the sequence is LVLAGAILSIMLNPVLFALLE. Residues 389–558 lie on the Cytoplasmic side of the membrane; it reads KYLAKTETLE…TPPAGEVVTG (170 aa). The RCK N-terminal domain maps to 417-534; that stretch reads CNHALLVGYG…TERGANQVVM (118 aa). AMP-binding positions include 427–428, 447–448, 467–468, Glu494, and Arg514; these read RV, ET, and NA.

This sequence belongs to the monovalent cation:proton antiporter 2 (CPA2) transporter (TC 2.A.37) family.

Its subcellular location is the cell inner membrane. In Escherichia coli (strain K12), this protein is Putative cation/proton antiporter YbaL (ybaL).